We begin with the raw amino-acid sequence, 229 residues long: Large ribosomal subunit protein uL1 (229 aa).

The protein belongs to the universal ribosomal protein uL1 family. Part of the 50S ribosomal subunit.

Functionally, binds directly to 23S rRNA. The L1 stalk is quite mobile in the ribosome, and is involved in E site tRNA release. In terms of biological role, protein L1 is also a translational repressor protein, it controls the translation of the L11 operon by binding to its mRNA. The sequence is that of Large ribosomal subunit protein uL1 from Streptococcus suis (strain 98HAH33).